Reading from the N-terminus, the 2053-residue chain is Integrator complex subunit 1 (2053 aa).

Disordered stretches follow at residues 36-58 (KILP…ALAS) and 249-285 (SLPS…ESEP). Over residues 268 to 283 (DNSTQSLDASPLNTES) the composition is skewed to polar residues. Residues 708–728 (LAIIAFYWKAWLILLMISAHN) form a helical membrane-spanning segment.

This sequence belongs to the Integrator subunit 1 family. Belongs to the multiprotein complex Integrator, at least composed of IntS1, IntS2, IntS3, IntS4, omd/IntS5, IntS6, defl/IntS7, IntS8, IntS9, IntS10, IntS11, IntS12, asun/IntS13, IntS14 and IntS15. The core complex associates with protein phosphatase 2A subunits mts/PP2A and Pp2A-29B, to form the Integrator-PP2A (INTAC) complex. Within the complex, interacts with IntS12 and IntS9. Interaction with IntS12 is likely to be important for promoting 3'-end processing of snRNAs. Interacts with Mediator complex members Cdk8 and CycC.

The protein resides in the nucleus membrane. Its subcellular location is the nucleus. Its function is as follows. Component of the integrator complex, a multiprotein complex that terminates RNA polymerase II (Pol II) transcription in the promoter-proximal region of genes. The integrator complex provides a quality checkpoint during transcription elongation by driving premature transcription termination of transcripts that are unfavorably configured for transcriptional elongation: the complex terminates transcription by (1) catalyzing dephosphorylation of the C-terminal domain (CTD) of Pol II subunit Polr2A/Rbp1 and Spt5, and (2) degrading the exiting nascent RNA transcript via endonuclease activity. The integrator complex is also involved in the 3'-end processing of the U7 snRNA, and also the spliceosomal snRNAs U1, U2, U4 and U5. Required for the normal expression of the Integrator complex component IntS12. The protein is Integrator complex subunit 1 of Drosophila melanogaster (Fruit fly).